The primary structure comprises 466 residues: A-type ATP synthase subunit B (466 aa).

It belongs to the ATPase alpha/beta chains family. As to quaternary structure, has multiple subunits with at least A(3), B(3), C, D, E, F, H, I and proteolipid K(x).

Its subcellular location is the cell membrane. In terms of biological role, component of the A-type ATP synthase that produces ATP from ADP in the presence of a proton gradient across the membrane. The B chain is a regulatory subunit. The polypeptide is A-type ATP synthase subunit B (Metallosphaera sedula (strain ATCC 51363 / DSM 5348 / JCM 9185 / NBRC 15509 / TH2)).